Reading from the N-terminus, the 221-residue chain is Molybdenum cofactor guanylyltransferase (221 aa).

Residues 18 to 20 (IAG), K35, N63, D81, and D112 contribute to the GTP site. D112 serves as a coordination point for Mg(2+).

It belongs to the MobA family. Monomer. The cofactor is Mg(2+).

The protein resides in the cytoplasm. It carries out the reaction Mo-molybdopterin + GTP + H(+) = Mo-molybdopterin guanine dinucleotide + diphosphate. Transfers a GMP moiety from GTP to Mo-molybdopterin (Mo-MPT) cofactor (Moco or molybdenum cofactor) to form Mo-molybdopterin guanine dinucleotide (Mo-MGD) cofactor. This chain is Molybdenum cofactor guanylyltransferase, found in Brucella melitensis biotype 2 (strain ATCC 23457).